The chain runs to 450 residues: Phosphoglucosamine mutase (450 aa).

S103 acts as the Phosphoserine intermediate in catalysis. Mg(2+) contacts are provided by S103, D243, D245, and D247. S103 carries the phosphoserine modification.

Belongs to the phosphohexose mutase family. Requires Mg(2+) as cofactor. In terms of processing, activated by phosphorylation.

The catalysed reaction is alpha-D-glucosamine 1-phosphate = D-glucosamine 6-phosphate. Its function is as follows. Catalyzes the conversion of glucosamine-6-phosphate to glucosamine-1-phosphate. In Lactobacillus helveticus (strain DPC 4571), this protein is Phosphoglucosamine mutase.